Reading from the N-terminus, the 157-residue chain is Endoribonuclease YbeY (157 aa).

Residues H116, H120, and H126 each coordinate Zn(2+).

It belongs to the endoribonuclease YbeY family. It depends on Zn(2+) as a cofactor.

It localises to the cytoplasm. In terms of biological role, single strand-specific metallo-endoribonuclease involved in late-stage 70S ribosome quality control and in maturation of the 3' terminus of the 16S rRNA. The protein is Endoribonuclease YbeY of Pseudarthrobacter chlorophenolicus (strain ATCC 700700 / DSM 12829 / CIP 107037 / JCM 12360 / KCTC 9906 / NCIMB 13794 / A6) (Arthrobacter chlorophenolicus).